The sequence spans 915 residues: MATNFLTKLFGSRNDRLLKQYRKTVVRINAMEPDYEKLSDEALRAKTQEFKERVAKGESLDDLLPEAFAVVREGSKRVMKMRHFDVQLLGGMALHYGKIAEMRTGEGKTLTATLPVYLNALSGNGVHVVTVNDYLANRDATWMAKLYNFLGLSVGINLPNMPREEKQAAYNSDITYGTNNEYGFDYLRDNMVYESGDRVQRVLNYAIVDEVDSILIDEARTPLIISGQAEDHTAMYVAMNKIVPNLVRQEGEADPRTGEGVTKPGDFTVDEKSHQVFLTDQGYEAAERLLGHAGMIAEGASLYDPANITLVHHLYAALRANNLYHRDQHYVVQNGEIVIVDEFTGRLMAGRRWSDGLHQAVEAKEGVTIQAENQTMASITFQNYFRLYGKLAGMTGTADTEAYEFQEIYGLETMVIPPNRPSKRDDQLDRVYKTTREKYEAAIRDIRECYERGQPVLVGTTSIENSEIIDELLNKENLPHQVLNAKQHEREADIVAQAGRPGMITIATNMAGRGTDIVLGGNIEKQVAAVEADESLSEAERQQRIEQMRADWKIEHDKVSALGGLRIIATERHESRRIDNQLRGRSGRQGDPGSSRFYLSLDDALMRIFAGDRVRAIMDRLKMPDGEAIEAGIVTRSIEGAQRKVEARNFDIRKQLLEYDDVSNDQRKVIYQQRNEILDASDLYEMITVMRDDVVSDLVRQYVPAESMEEQWDLAGLEKALESEWRIQLPLQSQVQSAHAITDEEILEKVLQAAREVFDAKVELIGRENFTQFQRAVLLQSFDTNWRDHLSALDYLRQGIHLRGYAQKQPKQEYKREAFELFRQLIDQVKTEVTRVLMTVQVQSREQVEQATEALEQRSAHSLEHMTYGAPSDGDIGGSVEDEPLELPEGARVGRNDPCPCGSGKKYKQCHGKLS.

ATP is bound by residues glutamine 87, 105-109 (GEGKT), and aspartate 516. A disordered region spans residues 866–915 (MTYGAPSDGDIGGSVEDEPLELPEGARVGRNDPCPCGSGKKYKQCHGKLS). Residues cysteine 899, cysteine 901, cysteine 910, and histidine 911 each contribute to the Zn(2+) site. Basic residues predominate over residues 905–915 (KKYKQCHGKLS).

This sequence belongs to the SecA family. Monomer and homodimer. Part of the essential Sec protein translocation apparatus which comprises SecA, SecYEG and auxiliary proteins SecDF-YajC and YidC. Zn(2+) is required as a cofactor.

It is found in the cell inner membrane. The protein localises to the cytoplasm. It catalyses the reaction ATP + H2O + cellular proteinSide 1 = ADP + phosphate + cellular proteinSide 2.. In terms of biological role, part of the Sec protein translocase complex. Interacts with the SecYEG preprotein conducting channel. Has a central role in coupling the hydrolysis of ATP to the transfer of proteins into and across the cell membrane, serving both as a receptor for the preprotein-SecB complex and as an ATP-driven molecular motor driving the stepwise translocation of polypeptide chains across the membrane. The chain is Protein translocase subunit SecA from Delftia acidovorans (strain DSM 14801 / SPH-1).